Here is a 61-residue protein sequence, read N- to C-terminus: Insect toxin AaHIT5 (61 aa).

The 61-residue stretch at 1–61 (DGYIKRHDGC…AWKSETNTCD (61 aa)) folds into the LCN-type CS-alpha/beta domain. Intrachain disulfides connect cysteine 10-cysteine 60, cysteine 14-cysteine 35, cysteine 21-cysteine 42, and cysteine 25-cysteine 44.

As to expression, expressed by the venom gland.

Its subcellular location is the secreted. In terms of biological role, excitatory insect toxins induce a spastic paralysis. They bind voltage-independently to sodium channels (Nav) and shift the voltage of activation toward more negative potentials thereby affecting sodium channel activation and promoting spontaneous and repetitive firing. This toxin elicits excitatory activity with no flaccid paralysis despite its high degree of sequence similarity with other depressant insect toxins. This toxin is active only on insects. The polypeptide is Insect toxin AaHIT5 (Androctonus australis (Sahara scorpion)).